The chain runs to 86 residues: Cell division topological specificity factor (86 aa).

This sequence belongs to the MinE family.

Its function is as follows. Prevents the cell division inhibition by proteins MinC and MinD at internal division sites while permitting inhibition at polar sites. This ensures cell division at the proper site by restricting the formation of a division septum at the midpoint of the long axis of the cell. In Parasynechococcus marenigrum (strain WH8102), this protein is Cell division topological specificity factor.